The sequence spans 492 residues: G2/mitotic-specific cyclin CYB1 (492 aa).

The interval 1–176 (MPQVTKTNNE…QPEVGERSQS (176 aa)) is disordered. Positions 23–33 (QESISTIKNTT) are enriched in polar residues. The segment covering 34-58 (ISNSQHKQQTQQQISSPPQVSVTSS) has biased composition (low complexity). Positions 59 to 83 (EGVSHVNTRQYLGDVSNQYITNAKP) are enriched in polar residues. A compositionally biased stretch (low complexity) spans 111 to 135 (ASDNNNNGSTSSSSNSSNNNNNDAN).

It belongs to the cyclin family. Cyclin AB subfamily.

Its function is as follows. Essential for the control of the cell cycle at the G2/M (mitosis) transition. Interacts with the CDC2 protein kinase to form MPF. G2/M cyclins accumulate steadily during G2 and are abruptly destroyed at mitosis. This Candida albicans (Yeast) protein is G2/mitotic-specific cyclin CYB1 (CYB1).